Here is a 145-residue protein sequence, read N- to C-terminus: Transcription antitermination protein NusB (145 aa).

Belongs to the NusB family.

Involved in transcription antitermination. Required for transcription of ribosomal RNA (rRNA) genes. Binds specifically to the boxA antiterminator sequence of the ribosomal RNA (rrn) operons. This is Transcription antitermination protein NusB from Geobacter sp. (strain M21).